The primary structure comprises 111 residues: UPF0060 membrane protein Pden_1837 (111 aa).

The next 4 membrane-spanning stretches (helical) occupy residues 7-27 (IAVYVLAALAEIAGCFAFWAW), 30-50 (LGKSPLWLVPGMVSLAVFAWL), 62-82 (AYAAYGGIYVTASLGWLWLTE), and 91-111 (ILGGGLCVLGAMVILAGPRAA).

It belongs to the UPF0060 family.

The protein localises to the cell inner membrane. The protein is UPF0060 membrane protein Pden_1837 of Paracoccus denitrificans (strain Pd 1222).